We begin with the raw amino-acid sequence, 360 residues long: MTATLQRRESASLWERFCSWITSTENRLYIGWFGVLMIPTLLTATSVFIIAFVAAPPVDIDGIREPVAGSLLYGNNIISGAVIPSSAAIGIHFYPIWEAASLDEWLYNGGPYQLVVLHFLTGVACYIGREWELSYRLGMRPWISVAFTAPVAAAAAVFLVYPIGQGSFSDGMPLGISGTFNFMLVFQAEHNILMHPFHQLGVAGVFGGSLFSAMHGSLVTSSLIRETSENESANYAYKFGQEEETYNIVAAHGYFGRLIFQYASFNNSRSLHFFLGLWPVVGIWLTALSVSTMAFNLNGFNFNQSVVDSQGRVINTWADIINRANLGMEVMHERNAHNFPLDLASGESLPVALTAPAVNG.

The next 3 helical transmembrane spans lie at tyrosine 29 to serine 46, histidine 118 to leucine 133, and tryptophan 142 to alanine 156. Histidine 118 contacts chlorophyll a. Residue tyrosine 126 coordinates pheophytin a. [CaMn4O5] cluster is bound by residues aspartate 170 and glutamate 189. The chain crosses the membrane as a helical span at residues phenylalanine 197–leucine 218. Histidine 198 is a chlorophyll a binding site. Residues histidine 215 and serine 264–phenylalanine 265 contribute to the a quinone site. Histidine 215 is a Fe cation binding site. Residue histidine 272 participates in Fe cation binding. Residues phenylalanine 274–leucine 288 form a helical membrane-spanning segment. The [CaMn4O5] cluster site is built by histidine 332, glutamate 333, aspartate 342, and alanine 344. Positions serine 345–glycine 360 are excised as a propeptide.

Belongs to the reaction center PufL/M/PsbA/D family. As to quaternary structure, PSII is composed of 1 copy each of membrane proteins PsbA, PsbB, PsbC, PsbD, PsbE, PsbF, PsbH, PsbI, PsbJ, PsbK, PsbL, PsbM, PsbT, PsbX, PsbY, PsbZ, Psb30/Ycf12, at least 3 peripheral proteins of the oxygen-evolving complex and a large number of cofactors. It forms dimeric complexes. The D1/D2 heterodimer binds P680, chlorophylls that are the primary electron donor of PSII, and subsequent electron acceptors. It shares a non-heme iron and each subunit binds pheophytin, quinone, additional chlorophylls, carotenoids and lipids. D1 provides most of the ligands for the Mn4-Ca-O5 cluster of the oxygen-evolving complex (OEC). There is also a Cl(-1) ion associated with D1 and D2, which is required for oxygen evolution. The PSII complex binds additional chlorophylls, carotenoids and specific lipids. is required as a cofactor. In terms of processing, tyr-161 forms a radical intermediate that is referred to as redox-active TyrZ, YZ or Y-Z. Post-translationally, C-terminally processed by CTPA; processing is essential to allow assembly of the oxygen-evolving complex and thus photosynthetic growth.

It localises to the plastid. The protein resides in the chloroplast thylakoid membrane. The enzyme catalyses 2 a plastoquinone + 4 hnu + 2 H2O = 2 a plastoquinol + O2. Functionally, photosystem II (PSII) is a light-driven water:plastoquinone oxidoreductase that uses light energy to abstract electrons from H(2)O, generating O(2) and a proton gradient subsequently used for ATP formation. It consists of a core antenna complex that captures photons, and an electron transfer chain that converts photonic excitation into a charge separation. The D1/D2 (PsbA/PsbD) reaction center heterodimer binds P680, the primary electron donor of PSII as well as several subsequent electron acceptors. The polypeptide is Photosystem II protein D1 (Porphyra purpurea (Red seaweed)).